The sequence spans 176 residues: Shikimate kinase (176 aa).

An ATP-binding site is contributed by G12–T17. Residue S16 participates in Mg(2+) binding. 3 residues coordinate substrate: D34, R58, and G80. R117 provides a ligand contact to ATP. A substrate-binding site is contributed by R136. R153 provides a ligand contact to ATP.

It belongs to the shikimate kinase family. In terms of assembly, monomer. Mg(2+) is required as a cofactor.

The protein localises to the cytoplasm. The catalysed reaction is shikimate + ATP = 3-phosphoshikimate + ADP + H(+). It functions in the pathway metabolic intermediate biosynthesis; chorismate biosynthesis; chorismate from D-erythrose 4-phosphate and phosphoenolpyruvate: step 5/7. Catalyzes the specific phosphorylation of the 3-hydroxyl group of shikimic acid using ATP as a cosubstrate. The sequence is that of Shikimate kinase from Mycobacterium avium (strain 104).